The chain runs to 767 residues: MGFINLSLFDVDKLMVWVSKFNPGKILSAICNLGIDCWNRFRKWFFGLNFDAHMWAVDAFIPLMPHYTEQMERVVDDFCSETPESKLEDCLELDTSVNEFFDEEVYKKDEEGVMKLQRSAARKHIKRVRPGMMQAAIKAVETRIRNRHTIFGDDMGKVDEAAVRATASDICGEFKINEHHTNALVYAAAYLAMTPDQRSIDSVKLAYNPKSQARRTLVSAIRENKAVAGFKSLEDFLGGPLSFPVEDAPYPILGIPEIRVAEKRASRVMKSKRVVGLPAVSAGLKVCVHQTSLHNMIVSLERRVFRVKNSAGELVVPPKPIQNAFDSISYFREEWLRKLSHKGQILKSSLADVVACYSSEKRKLYQKAADSLEKKPVQWRDSKVQAFIKVEKLECDTKDPVPRTIQPRSKRYNLAIGQYLRLNEKKMLDSIDDVFKEKTVLSGLDNRAQGRAIAHKWRKYQNPIGIGLDASRFDQHCSVDALKFEQTFYKACFPGDQQLETLLKWQLSNTGSALLPTGELVRYRTKGCRMSGDINTGLGNKILMCSMVHAFLKETGVRASLANNGDDCVLFCEKGDYEQINRNLEQWFLCRGFEMTVEKPVDVLEKVAFCRSQPVCIATQWAMVRQLGSLSRDCFSTQDWLNPKTFKDAMNALGQCNGIINDGVPIHMAQAKLMHRIGGNRKFNLDALHKQMEYSWRDRLGKRTNLLWSEVEDATRLSYFRAFGIEPYIQRIVEEYFSQVEITCEGRSTNVLPTHYSRIHKDLIKAR.

The region spanning 463-580 is the RdRp catalytic domain; that stretch reads PIGIGLDASR…FCEKGDYEQI (118 aa).

This sequence belongs to the tombusviridae RNA polymerase family. As to quaternary structure, interacts with protein p27 (via C-terminus). In terms of assembly, forms homooligomers. interacts with host NbRACK1; this interaction is required for efficient viral replication. interacts with host NbRBOHB; this interaction triggers an intracellular ROS burst, important for viral replication. Interacts with host ARF1; this interaction is required for the assembly of the viral replicase complex.

Its subcellular location is the host endoplasmic reticulum membrane. It catalyses the reaction RNA(n) + a ribonucleoside 5'-triphosphate = RNA(n+1) + diphosphate. RNA-dependent RNA polymerase, made of isoforms p88 and p27, plays an essential role in the replication of the bipartite viral genome composed of RNA-1 and RNA-2. Replicase proteins p88 and p27 interact together and selectively recruit viral replication templates as well as other essential components into intracellular membranes for the assembly of the 480 kDa viral replicase complex. Mechanistically, isoform protein p27 binds to the Y-shaped RNA element (YRE) located in the 3' UTR of RNA2 via a direct RNA-protein interaction and to RNA1 in a translation-coupled manner. This RNA-binding activity allows RNA2 recruitment to host membranes. The viral replicase complex synthesizes the dsRNA genome from the genomic ssRNA(+). It recognizes internal subgenomic promoters on the negative-sense RNA to transcribe the 3' co-terminal subgenomic RNAs that will generate the capsid and movement proteins. In addition, the viral replication process requires the trigger of an intracellular ROS burst mediated by p27 recruitment of the host ROS-generating machinery. The viral replicase complex also acts as a suppressor of RNA-mediated gene silencing, known as post-transcriptional gene silencing (PTGS), a mechanism of plant viral defense that limits the accumulation of viral RNAs. This chain is RNA-directed RNA polymerase, found in Medicago sativa (Alfalfa).